The sequence spans 511 residues: Bifunctional purine biosynthesis protein PurH (511 aa).

An MGS-like domain is found at 1 to 146 (MGRLALISVT…KNFAHLTVIS (146 aa)).

It belongs to the PurH family.

The enzyme catalyses (6R)-10-formyltetrahydrofolate + 5-amino-1-(5-phospho-beta-D-ribosyl)imidazole-4-carboxamide = 5-formamido-1-(5-phospho-D-ribosyl)imidazole-4-carboxamide + (6S)-5,6,7,8-tetrahydrofolate. The catalysed reaction is IMP + H2O = 5-formamido-1-(5-phospho-D-ribosyl)imidazole-4-carboxamide. It participates in purine metabolism; IMP biosynthesis via de novo pathway; 5-formamido-1-(5-phospho-D-ribosyl)imidazole-4-carboxamide from 5-amino-1-(5-phospho-D-ribosyl)imidazole-4-carboxamide (10-formyl THF route): step 1/1. Its pathway is purine metabolism; IMP biosynthesis via de novo pathway; IMP from 5-formamido-1-(5-phospho-D-ribosyl)imidazole-4-carboxamide: step 1/1. This is Bifunctional purine biosynthesis protein PurH from Microcystis aeruginosa (strain NIES-843 / IAM M-2473).